Here is a 104-residue protein sequence, read N- to C-terminus: L-rhamnose mutarotase (104 aa).

Substrate is bound at residue tyrosine 18. Histidine 22 (proton donor) is an active-site residue. Residues tyrosine 41 and 76–77 (WW) contribute to the substrate site.

Belongs to the rhamnose mutarotase family. In terms of assembly, homodimer.

It is found in the cytoplasm. The enzyme catalyses alpha-L-rhamnose = beta-L-rhamnose. It participates in carbohydrate metabolism; L-rhamnose metabolism. Its function is as follows. Involved in the anomeric conversion of L-rhamnose. The sequence is that of L-rhamnose mutarotase from Listeria monocytogenes serotype 4b (strain F2365).